Reading from the N-terminus, the 510-residue chain is ATP synthase subunit alpha (510 aa).

169-176 (GDRQTGKT) contributes to the ATP binding site.

The protein belongs to the ATPase alpha/beta chains family. F-type ATPases have 2 components, CF(1) - the catalytic core - and CF(0) - the membrane proton channel. CF(1) has five subunits: alpha(3), beta(3), gamma(1), delta(1), epsilon(1). CF(0) has three main subunits: a(1), b(2) and c(9-12). The alpha and beta chains form an alternating ring which encloses part of the gamma chain. CF(1) is attached to CF(0) by a central stalk formed by the gamma and epsilon chains, while a peripheral stalk is formed by the delta and b chains.

The protein localises to the cell inner membrane. The enzyme catalyses ATP + H2O + 4 H(+)(in) = ADP + phosphate + 5 H(+)(out). In terms of biological role, produces ATP from ADP in the presence of a proton gradient across the membrane. The alpha chain is a regulatory subunit. In Rickettsia conorii (strain ATCC VR-613 / Malish 7), this protein is ATP synthase subunit alpha.